The chain runs to 622 residues: Iron transport multicopper oxidase FET3 (622 aa).

An N-terminal signal peptide occupies residues 1–22; sequence MRPKLLSVEAALFLALPELARA. The Extracellular portion of the chain corresponds to 23–553; that stretch reads ATRKFDFEIG…NTLPPGFTPR (531 aa). 3 Plastocyanin-like domains span residues 31–146, 156–303, and 363–498; these read IGWV…VHDK, EEVV…VYDK, and YTEA…VEDP. N-linked (GlcNAc...) asparagine glycosylation occurs at asparagine 76. Cu cation contacts are provided by histidine 82 and histidine 84. Asparagine 89 and asparagine 114 each carry an N-linked (GlcNAc...) asparagine glycan. Residues histidine 126 and histidine 128 each coordinate Cu cation. N-linked (GlcNAc...) asparagine glycans are attached at residues asparagine 196, asparagine 200, and asparagine 294. Cu cation is bound by residues histidine 414, histidine 417, and histidine 419. N-linked (GlcNAc...) asparagine glycosylation is present at asparagine 440. Histidine 479, cysteine 480, histidine 481, and histidine 485 together coordinate Cu cation. Residues 554-574 form a helical membrane-spanning segment; that stretch reads GIVALVFSCICGILGVAVVAW. Over 575–622 the chain is Cytoplasmic; that stretch reads YGFSAPVGSTSAGALSAGLVENDSGDVHSAQKGPQETVVSPTGDARSH. The disordered stretch occupies residues 597-622; it reads DSGDVHSAQKGPQETVVSPTGDARSH.

The protein belongs to the multicopper oxidase family.

It is found in the cell membrane. In terms of biological role, cell surface ferroxidase; part of the reductive iron assimilatory system (RIA), a siderophore-independent iron acquisition process. Required to oxidize Fe(2+) and release it from the transporter. Seems not to be involved in virulence. In Gibberella zeae (strain ATCC MYA-4620 / CBS 123657 / FGSC 9075 / NRRL 31084 / PH-1) (Wheat head blight fungus), this protein is Iron transport multicopper oxidase FET3.